The primary structure comprises 357 residues: Peptide chain release factor 1 (357 aa).

Position 234 is an N5-methylglutamine (Gln-234).

This sequence belongs to the prokaryotic/mitochondrial release factor family. Post-translationally, methylated by PrmC. Methylation increases the termination efficiency of RF1.

The protein resides in the cytoplasm. Its function is as follows. Peptide chain release factor 1 directs the termination of translation in response to the peptide chain termination codons UAG and UAA. The polypeptide is Peptide chain release factor 1 (Arthrobacter sp. (strain FB24)).